A 356-amino-acid polypeptide reads, in one-letter code: sn-glycerol-3-phosphate import ATP-binding protein UgpC (356 aa).

The ABC transporter domain maps to 4 to 235 (LKLQAVTKSW…PASRFVASFI (232 aa)). 37–44 (GPSGCGKS) contacts ATP.

It belongs to the ABC transporter superfamily. sn-glycerol-3-phosphate importer (TC 3.A.1.1.3) family. The complex is composed of two ATP-binding proteins (UgpC), two transmembrane proteins (UgpA and UgpE) and a solute-binding protein (UgpB).

The protein localises to the cell inner membrane. It carries out the reaction sn-glycerol 3-phosphate(out) + ATP + H2O = sn-glycerol 3-phosphate(in) + ADP + phosphate + H(+). Its function is as follows. Part of the ABC transporter complex UgpBAEC involved in sn-glycerol-3-phosphate (G3P) import. Responsible for energy coupling to the transport system. The chain is sn-glycerol-3-phosphate import ATP-binding protein UgpC from Salmonella typhimurium (strain LT2 / SGSC1412 / ATCC 700720).